We begin with the raw amino-acid sequence, 441 residues long: MSLITDIIAREVLDSRGNPTLEAEVITELGGFGRGMVPSGASTGEHEAVELRDGDKSRFGGKGTTKAVANVNDVIAKALVGKFDVTDQRAIDQAMIELDGTENKGKLGANAILAVSIAAARAAADELGVPLFSYLGGANSYVLPTPMMNVINGGAHSANKVDFQEFMIMPVGAPTVKEAIRYGAETFHALKKLLEADGKATSVGDEGGFAPDFADNEEPLKYLIRAIEAAGYKPGKDIAIAVDVASSELYDAATKTYKLRWSTGDEFTTPEFIKYLEDLADRYPIISIEDPIDENEWEDWAEITSELGKKVQLVGDDFFVTNTQYLQKGINMGAANSILIKVNQIGTLTETFEAIEMAKEAGYTAIVSHRSGETEDTTISDLVVATNAGQIKTGSLSRTDRIAKYNQLIRIEELLDTTAQYKGIHSFYNLSAAAREAIQAK.

Q164 contacts (2R)-2-phosphoglycerate. E206 serves as the catalytic Proton donor. Mg(2+) contacts are provided by D243, E289, and D316. K341, R370, S371, and K392 together coordinate (2R)-2-phosphoglycerate. The active-site Proton acceptor is the K341.

The protein belongs to the enolase family. The cofactor is Mg(2+).

The protein resides in the cytoplasm. It localises to the secreted. Its subcellular location is the cell surface. The catalysed reaction is (2R)-2-phosphoglycerate = phosphoenolpyruvate + H2O. It functions in the pathway carbohydrate degradation; glycolysis; pyruvate from D-glyceraldehyde 3-phosphate: step 4/5. In terms of biological role, catalyzes the reversible conversion of 2-phosphoglycerate (2-PG) into phosphoenolpyruvate (PEP). It is essential for the degradation of carbohydrates via glycolysis. This chain is Enolase, found in Leuconostoc citreum (strain KM20).